A 604-amino-acid chain; its full sequence is Nuclear factor erythroid 2-related factor 2 (604 aa).

Positions 29-31 match the DLG motif motif; it reads DLG. At serine 40 the chain carries Phosphoserine; by PKC. The ETGE motif signature appears at 79–82; it reads ETGE. The residue at position 214 (serine 214) is a Phosphoserine. Positions 334 to 447 are disordered; the sequence is TVEFNDSDSG…VPFTKDKHSS (114 aa). Polar residues-rich tracts occupy residues 340–352 and 395–407; these read SDSGISLNTSPSR and PTHSSGDTVQPLS. N-linked (Glc) (glycation) lysine glycosylation is found at lysine 461, lysine 471, and lysine 486. Residues 496–559 enclose the bZIP domain; sequence LIRDIRRRGK…HLLKRKLSTL (64 aa). N-linked (Glc) (glycation) arginine glycosylation is present at arginine 498. Positions 498–517 are basic motif; it reads RDIRRRGKNKVAAQNCRKRK. Residues 521 to 528 form a leucine-zipper region; sequence IVELEQDL. Arginine 568 carries an N-linked (Glc) (glycation) arginine glycan. Residues 570 to 604 form a disordered region; it reads EDGKPYSPSEYSLQQTRDGNVFLVPKSKKPDTKKN. Residue lysine 573 is glycosylated (N-linked (Glc) (glycation) lysine). The span at 578-587 shows a compositional bias: polar residues; that stretch reads SEYSLQQTRD. Residues 590-595 form a mediates interaction with CHD6 and is necessary to activate transcription region; that stretch reads VFLVPK. Residues lysine 595 and lysine 598 each carry the N6-acetyllysine; by CREBBP modification.

This sequence belongs to the bZIP family. CNC subfamily. As to quaternary structure, heterodimer; heterodimerizes with small Maf proteins. Interacts (via the bZIP domain) with MAFG and MAFK; required for binding to antioxidant response elements (AREs) on DNA. Interacts with KEAP1; the interaction is direct and promotes ubiquitination by the BCR(KEAP1) E3 ubiquitin ligase complex. Forms a ternary complex with PGAM5 and KEAP1. Interacts with EEF1D at heat shock promoter elements (HSE). Interacts via its leucine-zipper domain with the coiled-coil domain of PMF1. Interacts with CHD6; involved in activation of the transcription. Interacts with ESRRB; represses NFE2L2 transcriptional activity. Interacts with MOTS-c, a peptide produced by the mitochondrially encoded 12S rRNA MT-RNR1; the interaction occurs in the nucleus following metabolic stress. Post-translationally, ubiquitinated in the cytoplasm by the BCR(KEAP1) E3 ubiquitin ligase complex leading to its degradation. In response to oxidative stress, electrophile metabolites, such as sulforaphane, modify KEAP1, leading to inhibit activity of the BCR(KEAP1) complex, promoting NFE2L2/NRF2 nuclear accumulation and activity. In response to autophagy, the BCR(KEAP1) complex is inactivated. In terms of processing, phosphorylated by EIF2AK3/PERK following unfolded protein response (UPR), promoting dissociation from its cytoplasmic inhibitor KEAP1, followed by its translocation into the nucleus. Phosphorylation of Ser-40 by PKC in response to oxidative stress dissociates NFE2L2 from its cytoplasmic inhibitor KEAP1, promoting its translocation into the nucleus. Acetylation at Lys-595 and Lys-598 increases nuclear localization whereas deacetylation by SIRT1 enhances cytoplasmic presence. Post-translationally, glycation impairs transcription factor activity by preventing heterodimerization with small Maf proteins. Deglycation by FN3K restores activity.

It localises to the cytoplasm. The protein localises to the cytosol. The protein resides in the nucleus. Transcription factor that plays a key role in the response to oxidative stress: binds to antioxidant response (ARE) elements present in the promoter region of many cytoprotective genes, such as phase 2 detoxifying enzymes, and promotes their expression, thereby neutralizing reactive electrophiles. In normal conditions, ubiquitinated and degraded in the cytoplasm by the BCR(KEAP1) complex. In response to oxidative stress, electrophile metabolites inhibit activity of the BCR(KEAP1) complex, promoting nuclear accumulation of NFE2L2/NRF2, heterodimerization with one of the small Maf proteins and binding to ARE elements of cytoprotective target genes. The NFE2L2/NRF2 pathway is also activated in response to selective autophagy: autophagy promotes interaction between KEAP1 and SQSTM1/p62 and subsequent inactivation of the BCR(KEAP1) complex, leading to NFE2L2/NRF2 nuclear accumulation and expression of cytoprotective genes. The NFE2L2/NRF2 pathway is also activated during the unfolded protein response (UPR), contributing to redox homeostasis and cell survival following endoplasmic reticulum stress. May also be involved in the transcriptional activation of genes of the beta-globin cluster by mediating enhancer activity of hypersensitive site 2 of the beta-globin locus control region. Also plays an important role in the regulation of the innate immune response. It is a critical regulator of the innate immune response and survival during sepsis by maintaining redox homeostasis and restraint of the dysregulation of pro-inflammatory signaling pathways like MyD88-dependent and -independent and TNF-alpha signaling. Suppresses macrophage inflammatory response by blocking pro-inflammatory cytokine transcription and the induction of IL6. Binds to the proximity of pro-inflammatory genes in macrophages and inhibits RNA Pol II recruitment. The inhibition is independent of the Nrf2-binding motif and reactive oxygen species level. Represses antiviral cytosolic DNA sensing by suppressing the expression of the adapter protein STING1 and decreasing responsiveness to STING1 agonists while increasing susceptibility to infection with DNA viruses. The chain is Nuclear factor erythroid 2-related factor 2 from Rattus norvegicus (Rat).